The following is a 583-amino-acid chain: Extracellular serine/threonine protein kinase four-jointed (583 aa).

Residues 1–78 are Cytoplasmic-facing; it reads MYDIKRLEAG…RRRSLQRRAC (78 aa). The chain crosses the membrane as a helical; Signal-anchor for type II membrane protein span at residues 79–99; that stretch reads LLSILAAFVFGMALGVVVPMF. Residues 100 to 583 lie on the Extracellular side of the membrane; that stretch reads GLPRHQDSPP…LGQVQKCQGS (484 aa). Positions 179–222 are disordered; the sequence is RTASGRYRKGPERRLSKKMPERVQPQETSRSPTTSPTNPTSEHQ. Positions 187–199 are enriched in basic and acidic residues; it reads KGPERRLSKKMPE. The segment covering 206–219 has biased composition (low complexity); the sequence is TSRSPTTSPTNPTS. 2 N-linked (GlcNAc...) asparagine glycosylation sites follow: N310 and N379. A disordered region spans residues 384–421; that stretch reads MQSERQAQSQPHGLLKRLGAASSPGSAHQSNAIEETGT. Residue N491 is glycosylated (N-linked (GlcNAc...) asparagine).

It belongs to the FJX1/FJ family. Proteolytically cleaved to yield a secreted protein. As to expression, in the eye disk, expressed in a gradient ahead of the morphogenetic furrow, high at the equator and low at the poles of the eye. In the leg disk, expressed in concentric rings, possibly corresponding to segmental boundaries. In the wing disk, expression is localized in the wing pouch; low in peripheral regions and high towards the center.

Its subcellular location is the golgi apparatus membrane. It localises to the secreted. It catalyses the reaction L-seryl-[protein] + ATP = O-phospho-L-seryl-[protein] + ADP + H(+). The catalysed reaction is L-threonyl-[protein] + ATP = O-phospho-L-threonyl-[protein] + ADP + H(+). Functionally, golgi serine/threonine protein kinase required for intermediate growth in the proximal-distal axis. Phosphorylates specific residues within extracellular cadherin domains of Fat (ft) and Dachsous (ds) as they transit through the Golgi. Acts in ommatidial polarity determination as a secondary signal downstream of Notch, JAK/STAT and wingless. Also necessary for the initiation, up-regulation or maintenance of Notch ligand, Serrate (Ser) expression in legs, thereby participating in a feedback loop with N signaling. Sufficient for joint formation and growth in the leg. The polypeptide is Extracellular serine/threonine protein kinase four-jointed (Drosophila melanogaster (Fruit fly)).